The primary structure comprises 247 residues: Serine protease 1 (247 aa).

An N-terminal signal peptide occupies residues 1 to 15; that stretch reads MNPLLILTFVAAALA. The propeptide at 16-23 is activation peptide; sequence APFDDDDK. The region spanning 24–244 is the Peptidase S1 domain; sequence IVGGYNCEEN…YVKWIKNTIA (221 aa). Disulfide bonds link Cys-30–Cys-160, Cys-48–Cys-64, Cys-139–Cys-206, Cys-171–Cys-185, and Cys-196–Cys-220. Residue His-63 is the Charge relay system of the active site. Residues Glu-75, Asn-77, Val-80, and Glu-85 each coordinate Ca(2+). Asp-107 serves as the catalytic Charge relay system. At Tyr-154 the chain carries Sulfotyrosine. Ser-200 (charge relay system) is an active-site residue.

Belongs to the peptidase S1 family. Interacts with SERPINA1. Requires Ca(2+) as cofactor. In terms of processing, occurs in a single-chain form and a two-chain form, produced by proteolytic cleavage after Arg-122. Post-translationally, sulfation at Tyr-154 increases selectivity towards basic versus apolar residues at the P2' position of inhibitors that bind in a substrate-like fashion. Although the increase in selectivity is relatively small, it may facilitate digestion of a broader range of dietary proteins.

Its subcellular location is the secreted. The protein resides in the extracellular space. The catalysed reaction is Preferential cleavage: Arg-|-Xaa, Lys-|-Xaa.. In terms of biological role, has activity against the synthetic substrates Boc-Phe-Ser-Arg-Mec, Boc-Leu-Thr-Arg-Mec, Boc-Gln-Ala-Arg-Mec and Boc-Val-Pro-Arg-Mec. The single-chain form is more active than the two-chain form against all of these substrates. The chain is Serine protease 1 from Homo sapiens (Human).